The chain runs to 452 residues: Ribosomal protein uS12 methylthiotransferase RimO (452 aa).

The MTTase N-terminal domain maps to 8–123 (PRVGFVSLGC…VMQAVHTHLP (116 aa)). [4Fe-4S] cluster contacts are provided by Cys-17, Cys-53, Cys-82, Cys-154, Cys-158, and Cys-161. The Radical SAM core domain maps to 140-381 (LTPKHYAYLK…MEVAEEVSAR (242 aa)). Residues 384 to 452 (QRKVGQTLRV…ADGHDLWGEI (69 aa)) form the TRAM domain.

The protein belongs to the methylthiotransferase family. RimO subfamily. [4Fe-4S] cluster is required as a cofactor.

It localises to the cytoplasm. It carries out the reaction L-aspartate(89)-[ribosomal protein uS12]-hydrogen + (sulfur carrier)-SH + AH2 + 2 S-adenosyl-L-methionine = 3-methylsulfanyl-L-aspartate(89)-[ribosomal protein uS12]-hydrogen + (sulfur carrier)-H + 5'-deoxyadenosine + L-methionine + A + S-adenosyl-L-homocysteine + 2 H(+). Catalyzes the methylthiolation of an aspartic acid residue of ribosomal protein uS12. This is Ribosomal protein uS12 methylthiotransferase RimO from Cupriavidus pinatubonensis (strain JMP 134 / LMG 1197) (Cupriavidus necator (strain JMP 134)).